Reading from the N-terminus, the 1075-residue chain is Disheveled-associated activator of morphogenesis 2 (1075 aa).

A GBD/FH3 domain is found at 40–416 (VPIPPTEELN…QIVLQDERGD (377 aa)). Positions 437-517 (NENEVKQWRD…VAQLNEYSQG (81 aa)) form a coiled coil. Disordered stretches follow at residues 517-611 (GGSI…IPQP), 1006-1025 (KEQR…SISE), and 1048-1075 (SKLK…KLNY). Positions 523-532 (PAPPPPPPGG) are enriched in pro residues. Positions 533-544 (PLALSSALSSAL) are enriched in low complexity. Positions 550 to 581 (PPLPPPLPFSSCPPPPAPPPPPGGPPPPPGAP) are enriched in pro residues. Positions 605-1075 (KKSIPQPSHP…RERVVTKLNY (471 aa)) constitute an FH2 domain. One can recognise a DAD domain in the interval 1025–1075 (EETGEFDDLVSALRSGEVFDKDLSKLKRNRKRSGNQGLETSRERVVTKLNY). Positions 1064–1075 (TSRERVVTKLNY) are enriched in basic and acidic residues.

The protein belongs to the formin homology family. In terms of tissue distribution, expressed in progenitor populations of the embryonic spinal cord (at protein level).

Functionally, key regulator of the Wnt signaling pathway, which is required for various processes during development, such as dorsal patterning, determination of left/right symmetry or myelination in the central nervous system. Acts downstream of Wnt ligands and upstream of beta-catenin (CTNNB1). Required for canonical Wnt signaling pathway during patterning in the dorsal spinal cord by promoting the aggregation of Disheveled (Dvl) complexes, thereby clustering and formation of Wnt receptor signalosomes and potentiating Wnt activity. During dorsal patterning of the spinal cord, inhibits oligodendrocytes differentiation via interaction with PIP5K1A. Also regulates non-canonical Wnt signaling pathway. Acts downstream of PITX2 in the developing gut and is required for left/right asymmetry within dorsal mesentery: affects mesenchymal condensation by lengthening cadherin-based junctions through WNT5A and non-canonical Wnt signaling, inducing polarized condensation in the left dorsal mesentery necessary to initiate gut rotation. Together with DAAM1, required for myocardial maturation and sarcomere assembly. This Gallus gallus (Chicken) protein is Disheveled-associated activator of morphogenesis 2.